A 215-amino-acid chain; its full sequence is Probable phosphoglycerate mutase GpmB (215 aa).

Substrate contacts are provided by residues 8-15, 21-22, Arg58, Lys60, 82-85, 104-105, and 151-152; these read RHGETQWN, QG, ELDM, RR, and GI. His9 acts as the Tele-phosphohistidine intermediate in catalysis. Catalysis depends on Glu82, which acts as the Proton donor/acceptor.

It belongs to the phosphoglycerate mutase family. GpmB subfamily.

It carries out the reaction (2R)-2-phosphoglycerate = (2R)-3-phosphoglycerate. It functions in the pathway carbohydrate degradation; glycolysis; pyruvate from D-glyceraldehyde 3-phosphate: step 3/5. This chain is Probable phosphoglycerate mutase GpmB, found in Salmonella agona (strain SL483).